We begin with the raw amino-acid sequence, 248 residues long: Probable transcriptional regulatory protein PFL_4766 (248 aa).

It belongs to the TACO1 family.

Its subcellular location is the cytoplasm. This Pseudomonas fluorescens (strain ATCC BAA-477 / NRRL B-23932 / Pf-5) protein is Probable transcriptional regulatory protein PFL_4766.